The following is a 111-amino-acid chain: Disintegrin Eo1 subunit 1 (111 aa).

Residues 1-20 (MIQVLLVIICLAVFPYQGSS) form the signal peptide. Positions 21–46 (IILESGNVNDFELVYPKKVTVLPTGA) are excised as a propeptide. Residues 26–111 (GNVNDFELVY…SDCPRNPWKD (86 aa)) form the Disintegrin domain. Cystine bridges form between Cys53–Cys76, Cys67–Cys73, Cys72–Cys97, and Cys85–Cys104. The short motif at 89–91 (WGD) is the Cell attachment site; atypical (WGD) element. A propeptide spanning residues 110–111 (KD) is cleaved from the precursor.

Belongs to the disintegrin family. Dimeric disintegrin subfamily. As to quaternary structure, heterodimer; disulfide-linked. In terms of tissue distribution, expressed by the venom gland.

Its subcellular location is the secreted. Functionally, poor inhibitor of platelet aggregation. The disintegrin inhibits the adhesion of cells expressing the RGD-dependent integrin alpha-5/beta-1 (ITGA5/ITGB1) to immobilized fibronectin. Inhibition on alpha-IIb/beta-3 (ITGA2B/ITGB3) is low. This is Disintegrin Eo1 subunit 1 from Echis ocellatus (Ocellated saw-scaled viper).